The primary structure comprises 108 residues: Nucleoid-associated protein Bphy_0952 (108 aa).

The segment at 87–108 (AQEKMGGMTSGLPLPPGFKLPF) is disordered. Over residues 99 to 108 (PLPPGFKLPF) the composition is skewed to pro residues.

The protein belongs to the YbaB/EbfC family. Homodimer.

Its subcellular location is the cytoplasm. It localises to the nucleoid. Its function is as follows. Binds to DNA and alters its conformation. May be involved in regulation of gene expression, nucleoid organization and DNA protection. The protein is Nucleoid-associated protein Bphy_0952 of Paraburkholderia phymatum (strain DSM 17167 / CIP 108236 / LMG 21445 / STM815) (Burkholderia phymatum).